The sequence spans 267 residues: Ribosomal RNA small subunit methyltransferase NEP1 (267 aa).

Positions 1-46 (MSELKNGTTEPKKNETTQSDSKSKSTSTNKSSVPPASLVPVQPTAL) are disordered. The span at 16 to 32 (TTQSDSKSKSTSTNKSS) shows a compositional bias: low complexity. S-adenosyl-L-methionine-binding positions include leucine 195, glycine 222, 227 to 229 (GKD), and 242 to 247 (LSDYPL).

The protein belongs to the class IV-like SAM-binding methyltransferase superfamily. RNA methyltransferase NEP1 family. As to quaternary structure, homodimer.

It is found in the nucleus. The protein localises to the nucleolus. The catalysed reaction is a pseudouridine in rRNA + S-adenosyl-L-methionine = an N(1)-methylpseudouridine in rRNA + S-adenosyl-L-homocysteine + H(+). Functionally, S-adenosyl-L-methionine-dependent pseudouridine N(1)-methyltransferase that methylates the pseudouridine corresponding to position 1189 (Psi1189) in S.cerevisiae 18S rRNA. Involved the biosynthesis of the hypermodified N1-methyl-N3-(3-amino-3-carboxypropyl) pseudouridine (m1acp3-Psi) conserved in eukaryotic 18S rRNA. Also has an essential role in 40S ribosomal subunit biogenesis independent on its methyltransferase activity, facilitating the incorporation of ribosomal protein S19 during the formation of pre-ribosomes. This chain is Ribosomal RNA small subunit methyltransferase NEP1, found in Candida albicans (Yeast).